Reading from the N-terminus, the 196-residue chain is Probable GTP-binding protein EngB (196 aa).

The 173-residue stretch at 24-196 folds into the EngB-type G domain; the sequence is ELSEVALSGR…IWNLIEPYIS (173 aa). Residues 32 to 39, 59 to 63, 77 to 80, 144 to 147, and 176 to 178 contribute to the GTP site; these read GRSNVGKS, GKTQT, DVPG, TKED, and YSS. Mg(2+) is bound by residues serine 39 and threonine 61.

This sequence belongs to the TRAFAC class TrmE-Era-EngA-EngB-Septin-like GTPase superfamily. EngB GTPase family. Requires Mg(2+) as cofactor.

Its function is as follows. Necessary for normal cell division and for the maintenance of normal septation. The polypeptide is Probable GTP-binding protein EngB (Staphylococcus aureus (strain MRSA252)).